Here is a 987-residue protein sequence, read N- to C-terminus: Ephrin type-B receptor 2 (987 aa).

The signal sequence occupies residues 1–19 (MGPLWFCCLPLALLPLLAA). The Extracellular segment spans residues 20–544 (VEETLMDSTT…QTSVQEKLPL (525 aa)). Positions 21 to 203 (EETLMDSTTA…FYRKCPRVIQ (183 aa)) constitute an Eph LBD domain. 2 cysteine pairs are disulfide-bonded: C63/C185 and C98/C108. N266, N337, N429, N478, and N483 each carry an N-linked (GlcNAc...) asparagine glycan. 2 Fibronectin type-III domains span residues 325 to 435 (IPSA…TNQA) and 436 to 531 (APSA…TMTE). Residues 545 to 565 (IIGSSAAGLVFLIAVVVIIIV) form a helical membrane-spanning segment. Residues 566 to 987 (CNRRGFERAD…QMNQIQSVEV (422 aa)) lie on the Cytoplasmic side of the membrane. The Protein kinase domain occupies 622-885 (VKIEQVIGAG…QIVNTLDKMI (264 aa)). ATP-binding positions include 628–636 (IGAGEFGEV) and K654. D747 serves as the catalytic Proton acceptor. A Glycyl lysine isopeptide (Lys-Gly) (interchain with G-Cter in ubiquitin) cross-link involves residue K892. The 65-residue stretch at 914–978 (TSFNTVDEWL…LNSIQVMRAQ (65 aa)) folds into the SAM domain. Residues 985 to 987 (VEV) carry the PDZ-binding motif.

It belongs to the protein kinase superfamily. Tyr protein kinase family. Ephrin receptor subfamily. As to quaternary structure, heterotetramer upon binding of the ligand. The heterotetramer is composed of an ephrin dimer and a receptor dimer. Oligomerization is probably required to induce biological responses. In terms of processing, ligand binding induces cleavage by matrix metalloproteinases (MMPs) such as MMP7/MMP9, producing an EphB2/N-terminal fragment (NTF) and a C-terminal long fragment (EphB2-LF). EphB2-LF is further cleaved by MMPs, producing EphB2/CTF1 which is further cleaved by the PS1/gamma-secretase producing EphB2/CTF2. Post-translationally, polyubiquitinated; ligand binding stimulates ubiquitination. Ubiquitinated by RNF186 at Lys-892, mainly through 'Lys-27'-linked polyubiquitin chains.

The protein localises to the cell membrane. Its subcellular location is the cell projection. The protein resides in the axon. It is found in the dendrite. It carries out the reaction L-tyrosyl-[protein] + ATP = O-phospho-L-tyrosyl-[protein] + ADP + H(+). Its function is as follows. Receptor tyrosine kinase which binds promiscuously transmembrane ephrin-B family ligands residing on adjacent cells, leading to contact-dependent bidirectional signaling into neighboring cells. The signaling pathway downstream of the receptor is referred to as forward signaling while the signaling pathway downstream of the ephrin ligand is referred to as reverse signaling. Functions in axon guidance during development. In addition to axon guidance, also regulates dendritic spines development and maturation and stimulates the formation of excitatory synapses. In Coturnix japonica (Japanese quail), this protein is Ephrin type-B receptor 2 (EPHB2).